Consider the following 210-residue polypeptide: ATP-dependent dethiobiotin synthetase BioD (210 aa).

Position 12 to 17 (12 to 17 (NVGKTH)) interacts with ATP. T16 provides a ligand contact to Mg(2+). The active site involves K37. T41 serves as a coordination point for substrate. Mg(2+) is bound at residue E114. Residue 114–117 (EGAG) participates in ATP binding.

The protein belongs to the dethiobiotin synthetase family. Homodimer. Requires Mg(2+) as cofactor.

The protein localises to the cytoplasm. The catalysed reaction is (7R,8S)-7,8-diammoniononanoate + CO2 + ATP = (4R,5S)-dethiobiotin + ADP + phosphate + 3 H(+). Its pathway is cofactor biosynthesis; biotin biosynthesis; biotin from 7,8-diaminononanoate: step 1/2. In terms of biological role, catalyzes a mechanistically unusual reaction, the ATP-dependent insertion of CO2 between the N7 and N8 nitrogen atoms of 7,8-diaminopelargonic acid (DAPA, also called 7,8-diammoniononanoate) to form a ureido ring. This is ATP-dependent dethiobiotin synthetase BioD from Sulfurovum sp. (strain NBC37-1).